Consider the following 572-residue polypeptide: Proline--tRNA ligase (572 aa).

This sequence belongs to the class-II aminoacyl-tRNA synthetase family. ProS type 1 subfamily. Homodimer.

The protein resides in the cytoplasm. It carries out the reaction tRNA(Pro) + L-proline + ATP = L-prolyl-tRNA(Pro) + AMP + diphosphate. Catalyzes the attachment of proline to tRNA(Pro) in a two-step reaction: proline is first activated by ATP to form Pro-AMP and then transferred to the acceptor end of tRNA(Pro). As ProRS can inadvertently accommodate and process non-cognate amino acids such as alanine and cysteine, to avoid such errors it has two additional distinct editing activities against alanine. One activity is designated as 'pretransfer' editing and involves the tRNA(Pro)-independent hydrolysis of activated Ala-AMP. The other activity is designated 'posttransfer' editing and involves deacylation of mischarged Ala-tRNA(Pro). The misacylated Cys-tRNA(Pro) is not edited by ProRS. This chain is Proline--tRNA ligase, found in Shewanella amazonensis (strain ATCC BAA-1098 / SB2B).